A 1270-amino-acid chain; its full sequence is Myosin-1 (1270 aa).

Residues 1–40 are disordered; it reads MGHSRRPAGGEKKSRGFGRSKAAADVGDGRQAGKPQVKKA. The region spanning 50–729 is the Myosin motor domain; the sequence is IGVSDLTLLS…TLFALETMRD (680 aa). Residue 143–150 participates in ATP binding; it reads GESGAGKT. At S371 the chain carries Phosphoserine. The tract at residues 418–500 is actin-binding; the sequence is SIGILDIYGF…PGVFAALNDA (83 aa). IQ domains follow at residues 733-753 and 754-779; these read HNMAIRIQRAWRNYLRYRIEC and AIRIQRFWRRMTGGLEFIKLRDQGHQ. Residues 787-980 enclose the TH1 domain; the sequence is RRRMSLLGSR…TIHTSAGEPP (194 aa). Disordered stretches follow at residues 960–1102 and 1144–1270; these read GASN…VLYD and PEAY…DDEW. Polar residues predominate over residues 963-974; the sequence is NVDSYKSSTIHT. Residues 1023–1058 show a composition bias toward pro residues; it reads ARQPMPQPTPQPAAVQPPPAPRPAVSPAAQPRPVPQ. Residues 1059–1078 show a composition bias toward low complexity; sequence PVAAVAAAQHTRNASSSSTR. Positions 1079 to 1088 are enriched in pro residues; that stretch reads APPPPPPATP. Residues 1092 to 1153 enclose the SH3 domain; sequence QRKPMAKVLY…PEAYLEEQVA (62 aa). The span at 1157 to 1167 shows a compositional bias: pro residues; sequence KPAPPPPPPAA. Composition is skewed to low complexity over residues 1168 to 1186 and 1238 to 1252; these read PRASPVPATNGAAAAVAAK and NSASNASLAGGLAEA.

The protein belongs to the TRAFAC class myosin-kinesin ATPase superfamily. Myosin family. In terms of processing, phosphorylation of the TEDS site (Ser-371) is required for the polarization of the actin cytoskeleton. Phosphorylation probably activates the myosin-I ATPase activity.

Its subcellular location is the cytoplasm. It is found in the cytoskeleton. The protein localises to the actin patch. Type-I myosin implicated in the organization of the actin cytoskeleton. Required for proper actin cytoskeleton polarization. At the cell cortex, assembles in patch-like structures together with proteins from the actin-polymerizing machinery and promotes actin assembly. Functions as actin nucleation-promoting factor (NPF) for the Arp2/3 complex. Plays an important role in polarized growth, spore germination, hyphal morphogenesis, and septal wall formation. The protein is Myosin-1 (myoA) of Aspergillus niger (strain ATCC MYA-4892 / CBS 513.88 / FGSC A1513).